A 224-amino-acid polypeptide reads, in one-letter code: Ribonuclease HII (224 aa).

Residues 1–219 (MMIAGIDEAG…VENIREELKK (219 aa)) enclose the RNase H type-2 domain. A divalent metal cation is bound by residues Asp-7, Glu-8, and Asp-105.

It belongs to the RNase HII family. Requires Mn(2+) as cofactor. It depends on Mg(2+) as a cofactor.

Its subcellular location is the cytoplasm. The catalysed reaction is Endonucleolytic cleavage to 5'-phosphomonoester.. In terms of biological role, endonuclease that specifically degrades the RNA of RNA-DNA hybrids. This is Ribonuclease HII from Methanosarcina barkeri (strain Fusaro / DSM 804).